The sequence spans 607 residues: UvrABC system protein C (607 aa).

In terms of domain architecture, GIY-YIG spans 14 to 93 (HKPGVYLMLD…IKKHKPRYNI (80 aa)). The 36-residue stretch at 203 to 238 (RDLLAELKRQMLQASERLNFEQAGQFRDQIRALKTT) folds into the UVR domain.

It belongs to the UvrC family. Interacts with UvrB in an incision complex.

The protein localises to the cytoplasm. Its function is as follows. The UvrABC repair system catalyzes the recognition and processing of DNA lesions. UvrC both incises the 5' and 3' sides of the lesion. The N-terminal half is responsible for the 3' incision and the C-terminal half is responsible for the 5' incision. The polypeptide is UvrABC system protein C (Desulfotalea psychrophila (strain LSv54 / DSM 12343)).